The chain runs to 410 residues: Schlafen-like protein 1 (410 aa).

Disordered regions lie at residues 1 to 20 and 141 to 199; these read MSLRKRSAQTQMWESPVMSQ and LHHR…SGVR. The span at 8–20 shows a compositional bias: polar residues; the sequence is AQTQMWESPVMSQ. Pro residues predominate over residues 154-173; that stretch reads SHSPGPSPGPSPGLRHPPLP. 264-271 lines the ATP pocket; it reads GVEDSGLV. Residues 370–401 are a coiled coil; the sequence is QKWAMELGKLEEKVKVLTLEKEQLQQQLRQRQ.

The protein belongs to the Schlafen family. Subgroup I subfamily.

In Mus musculus (Mouse), this protein is Schlafen-like protein 1 (Slfnl1).